The sequence spans 512 residues: Maturase K (512 aa).

It belongs to the intron maturase 2 family. MatK subfamily.

The protein localises to the plastid. It localises to the chloroplast. Its function is as follows. Usually encoded in the trnK tRNA gene intron. Probably assists in splicing its own and other chloroplast group II introns. In Lemna minor (Common duckweed), this protein is Maturase K.